We begin with the raw amino-acid sequence, 472 residues long: Putative cytochrome P450 135B1 (472 aa).

A heme-binding site is contributed by C388. Positions 442-472 (RDVSATSQATAQGAGCPAARGGGPSRAVGSQ) are disordered. Positions 452–472 (AQGAGCPAARGGGPSRAVGSQ) are enriched in low complexity.

Belongs to the cytochrome P450 family. Heme serves as cofactor.

This is Putative cytochrome P450 135B1 (cyp135B1) from Mycobacterium bovis (strain ATCC BAA-935 / AF2122/97).